Consider the following 241-residue polypeptide: 6-phosphogluconolactonase (241 aa).

Belongs to the glucosamine/galactosamine-6-phosphate isomerase family. 6-phosphogluconolactonase subfamily.

It catalyses the reaction 6-phospho-D-glucono-1,5-lactone + H2O = 6-phospho-D-gluconate + H(+). The protein operates within carbohydrate degradation; pentose phosphate pathway; D-ribulose 5-phosphate from D-glucose 6-phosphate (oxidative stage): step 2/3. Hydrolysis of 6-phosphogluconolactone to 6-phosphogluconate. The protein is 6-phosphogluconolactonase (pgl) of Treponema pallidum (strain Nichols).